Here is an 850-residue protein sequence, read N- to C-terminus: Protein SEY1 (850 aa).

A disordered region spans residues 1–27; that stretch reads MSDLPPPDLGSEEISVSPTSSSSSFVP. Residues 1–741 are Cytoplasmic-facing; the sequence is MSDLPPPDLG…KRALIQHVTH (741 aa). Residues 12-27 show a composition bias toward low complexity; that stretch reads EEISVSPTSSSSSFVP. Positions 64–297 constitute a GB1/RHD3-type G domain; it reads NNNYHIVSVF…NEDFLFKKYY (234 aa). A GTP-binding site is contributed by 74–81; it reads GSQSTGKS. Residues 742-762 traverse the membrane as a helical segment; sequence IPYYIYIVILVLGWNEFMAVL. Residues 763 to 765 lie on the Lumenal side of the membrane; that stretch reads RNP. A helical membrane pass occupies residues 766–786; that stretch reads FFFTLLLMLGAGTYVLYHLNL. The Cytoplasmic segment spans residues 787–850; it reads LKPAMVVVQR…SDLTPPGEGS (64 aa). A disordered region spans residues 816-850; the sequence is QPQEHAKRLSKMAGITEDKPEEIEMSDLTPPGEGS.

Belongs to the TRAFAC class dynamin-like GTPase superfamily. GB1/RHD3 GTPase family. RHD3 subfamily.

The protein resides in the endoplasmic reticulum membrane. Cooperates with the reticulon proteins and tubule-shaping DP1 family proteins to generate and maintain the structure of the tubular endoplasmic reticulum network. Has GTPase activity, which is required for its function in ER organization. This chain is Protein SEY1, found in Meyerozyma guilliermondii (strain ATCC 6260 / CBS 566 / DSM 6381 / JCM 1539 / NBRC 10279 / NRRL Y-324) (Yeast).